Consider the following 459-residue polypeptide: Cysteine--tRNA ligase (459 aa).

Residue Cys-27 participates in Zn(2+) binding. The 'HIGH' region signature appears at 29-39; sequence VTVYDDCHIGH. Positions 208, 233, and 237 each coordinate Zn(2+). The 'KMSKS' region motif lies at 265 to 269; the sequence is KMSKS. Lys-268 provides a ligand contact to ATP.

This sequence belongs to the class-I aminoacyl-tRNA synthetase family. Monomer. Zn(2+) is required as a cofactor.

The protein localises to the cytoplasm. The catalysed reaction is tRNA(Cys) + L-cysteine + ATP = L-cysteinyl-tRNA(Cys) + AMP + diphosphate. This chain is Cysteine--tRNA ligase, found in Francisella tularensis subsp. mediasiatica (strain FSC147).